The primary structure comprises 362 residues: MEVHNVSAPFNFSLPPGFGHRATDKALSIILVLMLLLIMLSLGCTMEFSKIKAHLWKPKGVIVALVAQFGIMPLAAFLLGKIFHLSNIEALAILICGCSPGGNLSNLFTLAMKGDMNLSIVMTTCSSFSALGMMPLLLYVYSKGIYDGDLKDKVPYKGIMISLVIVLIPCTIGIVLKSKRPHYVPYILKGGMIITFLLSVAVTALSVINVGNSIMFVMTPHLLATSSLMPFSGFLMGYILSALFQLNPSCRRTISMETGFQNIQLCSTILNVTFPPEVIGPLFFFPLLYMIFQLAEGLLIIIIFRCYEKIKPPKDQTKITYKAAATEDATPAALEKGTHNGNIPPLQPGPSPNGLNSGQMAN.

The Extracellular portion of the chain corresponds to 1–22 (MEVHNVSAPFNFSLPPGFGHRA). 2 N-linked (GlcNAc...) asparagine glycosylation sites follow: N5 and N11. A helical membrane pass occupies residues 23–44 (TDKALSIILVLMLLLIMLSLGC). The Cytoplasmic segment spans residues 45 to 47 (TME). A helical membrane pass occupies residues 48 to 83 (FSKIKAHLWKPKGVIVALVAQFGIMPLAAFLLGKIF). At 84-86 (HLS) the chain is on the extracellular side. A discontinuously helical transmembrane segment spans residues 87-112 (NIEALAILICGCSPGGNLSNLFTLAM). Topologically, residues 113–115 (KGD) are cytoplasmic. The chain crosses the membrane as a helical span at residues 116–142 (MNLSIVMTTCSSFSALGMMPLLLYVYS). Topologically, residues 143-156 (KGIYDGDLKDKVPY) are extracellular. Residues 157 to 179 (KGIMISLVIVLIPCTIGIVLKSK) traverse the membrane as a helical segment. At 180-183 (RPHY) the chain is on the cytoplasmic side. Residues 184-217 (VPYILKGGMIITFLLSVAVTALSVINVGNSIMFV) form a helical membrane-spanning segment. The Extracellular portion of the chain corresponds to 218 to 219 (MT). Residues 220 to 243 (PHLLATSSLMPFSGFLMGYILSAL) traverse the membrane as a helical segment. The Cytoplasmic segment spans residues 244–247 (FQLN). The chain crosses the membrane as a discontinuously helical span at residues 248-273 (PSCRRTISMETGFQNIQLCSTILNVT). The Extracellular portion of the chain corresponds to 274–280 (FPPEVIG). The chain crosses the membrane as a helical span at residues 281–311 (PLFFFPLLYMIFQLAEGLLIIIIFRCYEKIK). Residues 312-362 (PPKDQTKITYKAAATEDATPAALEKGTHNGNIPPLQPGPSPNGLNSGQMAN) lie on the Cytoplasmic side of the membrane. T330 is modified (phosphothreonine). Residues 333-362 (ALEKGTHNGNIPPLQPGPSPNGLNSGQMAN) form a disordered region. Over residues 353–362 (NGLNSGQMAN) the composition is skewed to polar residues.

This sequence belongs to the bile acid:sodium symporter (BASS) (TC 2.A.28) family. As to expression, highly expressed in liver and low expression in kidney.

It localises to the cell membrane. It carries out the reaction taurocholate(out) + 2 Na(+)(out) = taurocholate(in) + 2 Na(+)(in). It catalyses the reaction taurochenodeoxycholate(out) + 2 Na(+)(out) = taurochenodeoxycholate(in) + 2 Na(+)(in). The catalysed reaction is tauroursodeoxycholate(out) + 2 Na(+)(out) = tauroursodeoxycholate(in) + 2 Na(+)(in). The enzyme catalyses glycocholate(out) + 2 Na(+)(out) = glycocholate(in) + 2 Na(+)(in). It carries out the reaction estrone 3-sulfate(out) + 2 Na(+)(out) = estrone 3-sulfate(in) + 2 Na(+)(in). It catalyses the reaction cholate(out) + 2 Na(+)(out) = cholate(in) + 2 Na(+)(in). The catalysed reaction is tauronorcholate(out) + 2 Na(+)(out) = tauronorcholate(in) + 2 Na(+)(in). The enzyme catalyses taurodeoxycholate(out) + 2 Na(+)(out) = taurodeoxycholate(in) + 2 Na(+)(in). It carries out the reaction tauroallocholate(out) + 2 Na(+)(out) = tauroallocholate(in) + 2 Na(+)(in). It catalyses the reaction taurohyodeoxycholate(out) + 2 Na(+)(out) = taurohyodeoxycholate(in) + 2 Na(+)(in). The catalysed reaction is taurohyocholate(out) + 2 Na(+)(out) = taurohyocholate(in) + 2 Na(+)(in). The enzyme catalyses tauro-beta-muricholate(out) + 2 Na(+)(out) = tauro-beta-muricholate(in) + 2 Na(+)(in). With respect to regulation, the transport of bile acids is sodium-dependent. Its function is as follows. As a major transporter of conjugated bile salts from plasma into the hepatocyte, it plays a key role in the enterohepatic circulation of bile salts necessary for the solubilization and absorption of dietary fat and fat-soluble vitamins. It is strictly dependent on the extracellular presence of sodium. It exhibits broad substrate specificity and transports various bile acids, such as taurocholate, cholate, as well as non-bile acid organic compounds, such as estrone sulfate. Works collaboratively with the ileal transporter (NTCP2), the organic solute transporter (OST), and the bile salt export pump (BSEP), to ensure efficacious biological recycling of bile acids during enterohepatic circulation. This Rattus norvegicus (Rat) protein is Hepatic sodium/bile acid cotransporter (Slc10a1).